The primary structure comprises 164 residues: Phosphopantetheine adenylyltransferase (164 aa).

Ser-10 contributes to the substrate binding site. Residues 10–11 (SF) and His-18 contribute to the ATP site. Residues Lys-42, Leu-74, and Arg-88 each coordinate substrate. ATP is bound by residues 89-91 (GLR), Glu-99, and 124-130 (YSFLSSS).

This sequence belongs to the bacterial CoaD family. As to quaternary structure, homohexamer. Mg(2+) serves as cofactor.

The protein resides in the cytoplasm. It carries out the reaction (R)-4'-phosphopantetheine + ATP + H(+) = 3'-dephospho-CoA + diphosphate. It functions in the pathway cofactor biosynthesis; coenzyme A biosynthesis; CoA from (R)-pantothenate: step 4/5. In terms of biological role, reversibly transfers an adenylyl group from ATP to 4'-phosphopantetheine, yielding dephospho-CoA (dPCoA) and pyrophosphate. The chain is Phosphopantetheine adenylyltransferase from Exiguobacterium sibiricum (strain DSM 17290 / CCUG 55495 / CIP 109462 / JCM 13490 / 255-15).